A 341-amino-acid chain; its full sequence is Methionine import ATP-binding protein MetN 2 (341 aa).

Residues I2–V241 enclose the ABC transporter domain. An ATP-binding site is contributed by G38–S45.

The protein belongs to the ABC transporter superfamily. Methionine importer (TC 3.A.1.24) family. The complex is composed of two ATP-binding proteins (MetN), two transmembrane proteins (MetI) and a solute-binding protein (MetQ).

The protein localises to the cell membrane. It catalyses the reaction L-methionine(out) + ATP + H2O = L-methionine(in) + ADP + phosphate + H(+). It carries out the reaction D-methionine(out) + ATP + H2O = D-methionine(in) + ADP + phosphate + H(+). In terms of biological role, part of the ABC transporter complex MetNIQ involved in methionine import. Responsible for energy coupling to the transport system. This chain is Methionine import ATP-binding protein MetN 2, found in Staphylococcus aureus (strain MRSA252).